The chain runs to 154 residues: uncharacterized protein (154 aa).

Coiled-coil stretches lie at residues 8–48 and 89–138; these read DEEV…AIEA and VQEL…RGLV.

This is an uncharacterized protein from Treponema pallidum (strain Nichols).